The sequence spans 291 residues: MTVKPDWLRVKAPQWERVGNVKEILRDLALNTVCEEASCPNIGECFQAGTATFLIMGPACTRACPYCDIDFEKKPKALDPTEPTRLAEAVRRMRLNHVVITSVNRDDLPDGGASQFVKCIAEVRAVSPQTTIEVLIPDLCGNWEALRIILQASPEVLNHNTETIPRLYRRVRPQGNYDRTLELLQRSRQIAPWLYTKSGIMVGLGETNAEVRQVMQDLRAVDCDILTIGQYLQPSQKHLQVNDFVTPEQFAAWQVYGEELGFLQVVSSPLTRSSYHAEQVRQLMERYPRNK.

Residues Cys34, Cys39, Cys45, Cys60, Cys64, Cys67, and Ser274 each coordinate [4Fe-4S] cluster. The Radical SAM core domain occupies 46–263; that stretch reads FQAGTATFLI…QVYGEELGFL (218 aa).

The protein belongs to the radical SAM superfamily. Lipoyl synthase family. [4Fe-4S] cluster is required as a cofactor.

It is found in the cytoplasm. It catalyses the reaction [[Fe-S] cluster scaffold protein carrying a second [4Fe-4S](2+) cluster] + N(6)-octanoyl-L-lysyl-[protein] + 2 oxidized [2Fe-2S]-[ferredoxin] + 2 S-adenosyl-L-methionine + 4 H(+) = [[Fe-S] cluster scaffold protein] + N(6)-[(R)-dihydrolipoyl]-L-lysyl-[protein] + 4 Fe(3+) + 2 hydrogen sulfide + 2 5'-deoxyadenosine + 2 L-methionine + 2 reduced [2Fe-2S]-[ferredoxin]. It functions in the pathway protein modification; protein lipoylation via endogenous pathway; protein N(6)-(lipoyl)lysine from octanoyl-[acyl-carrier-protein]: step 2/2. In terms of biological role, catalyzes the radical-mediated insertion of two sulfur atoms into the C-6 and C-8 positions of the octanoyl moiety bound to the lipoyl domains of lipoate-dependent enzymes, thereby converting the octanoylated domains into lipoylated derivatives. This Nostoc sp. (strain PCC 7120 / SAG 25.82 / UTEX 2576) protein is Lipoyl synthase 1.